Here is a 314-residue protein sequence, read N- to C-terminus: 3'-5' exoribonuclease YhaM (314 aa).

An HD domain is found at His163–Lys279.

The protein belongs to the YhaM family.

Shows a 3'-5' exoribonuclease activity. In Bacillus pumilus (strain SAFR-032), this protein is 3'-5' exoribonuclease YhaM.